Here is a 933-residue protein sequence, read N- to C-terminus: Isoleucine--tRNA ligase (933 aa).

The 'HIGH' region signature appears at 57–67; the sequence is PYANGNIHVGH. Glu554 is an L-isoleucyl-5'-AMP binding site. The short motif at 595–599 is the 'KMSKS' region element; it reads KMSKS. ATP is bound at residue Lys598.

This sequence belongs to the class-I aminoacyl-tRNA synthetase family. IleS type 1 subfamily. Monomer.

The protein resides in the cytoplasm. It carries out the reaction tRNA(Ile) + L-isoleucine + ATP = L-isoleucyl-tRNA(Ile) + AMP + diphosphate. Its function is as follows. Catalyzes the attachment of isoleucine to tRNA(Ile). As IleRS can inadvertently accommodate and process structurally similar amino acids such as valine, to avoid such errors it has two additional distinct tRNA(Ile)-dependent editing activities. One activity is designated as 'pretransfer' editing and involves the hydrolysis of activated Val-AMP. The other activity is designated 'posttransfer' editing and involves deacylation of mischarged Val-tRNA(Ile). This chain is Isoleucine--tRNA ligase, found in Streptococcus pyogenes serotype M3 (strain ATCC BAA-595 / MGAS315).